Consider the following 175-residue polypeptide: uncharacterized protein (175 aa).

The segment covering 1 to 10 has biased composition (polar residues); that stretch reads MSKKINNNKT. Residues 1–21 form a disordered region; sequence MSKKINNNKTPRNKVKNNNVS.

This is an uncharacterized protein from Ureaplasma parvum serovar 3 (strain ATCC 700970).